A 371-amino-acid chain; its full sequence is Probable dual-specificity RNA methyltransferase RlmN (371 aa).

The Proton acceptor role is filled by glutamate 114. The Radical SAM core domain occupies 120-346; that stretch reads DGPRRSICVS…ESAGVNVNFR (227 aa). Cysteine 127 and cysteine 357 are disulfide-bonded. Positions 134, 138, and 141 each coordinate [4Fe-4S] cluster. S-adenosyl-L-methionine is bound by residues 183–184, serine 215, 238–240, and asparagine 314; these read GE and SLH. Cysteine 357 functions as the S-methylcysteine intermediate in the catalytic mechanism.

It belongs to the radical SAM superfamily. RlmN family. It depends on [4Fe-4S] cluster as a cofactor.

It is found in the cytoplasm. It carries out the reaction adenosine(2503) in 23S rRNA + 2 reduced [2Fe-2S]-[ferredoxin] + 2 S-adenosyl-L-methionine = 2-methyladenosine(2503) in 23S rRNA + 5'-deoxyadenosine + L-methionine + 2 oxidized [2Fe-2S]-[ferredoxin] + S-adenosyl-L-homocysteine. It catalyses the reaction adenosine(37) in tRNA + 2 reduced [2Fe-2S]-[ferredoxin] + 2 S-adenosyl-L-methionine = 2-methyladenosine(37) in tRNA + 5'-deoxyadenosine + L-methionine + 2 oxidized [2Fe-2S]-[ferredoxin] + S-adenosyl-L-homocysteine. Functionally, specifically methylates position 2 of adenine 2503 in 23S rRNA and position 2 of adenine 37 in tRNAs. This is Probable dual-specificity RNA methyltransferase RlmN from Rhodopirellula baltica (strain DSM 10527 / NCIMB 13988 / SH1).